The chain runs to 339 residues: Senescence-specific cysteine protease SAG39 (339 aa).

The signal sequence occupies residues 1–23 (MAMAKALLFAILGCLCLCSAVLA). Intrachain disulfides connect Cys144/Cys187, Cys178/Cys220, and Cys276/Cys328. The active site involves Cys147. Residues His282 and Asn303 contribute to the active site.

This sequence belongs to the peptidase C1 family. As to expression, low expression in mature leaves.

It is found in the vacuole. In terms of biological role, cysteine protease that may have a developmental senescence specific cell death function during apoptosis, heavy metal detoxification, and hypersensitive response. In Oryza sativa subsp. japonica (Rice), this protein is Senescence-specific cysteine protease SAG39.